A 94-amino-acid chain; its full sequence is Pyrimidine/purine nucleoside phosphorylase (94 aa).

The protein belongs to the nucleoside phosphorylase PpnP family.

The enzyme catalyses a purine D-ribonucleoside + phosphate = a purine nucleobase + alpha-D-ribose 1-phosphate. It catalyses the reaction adenosine + phosphate = alpha-D-ribose 1-phosphate + adenine. It carries out the reaction cytidine + phosphate = cytosine + alpha-D-ribose 1-phosphate. The catalysed reaction is guanosine + phosphate = alpha-D-ribose 1-phosphate + guanine. The enzyme catalyses inosine + phosphate = alpha-D-ribose 1-phosphate + hypoxanthine. It catalyses the reaction thymidine + phosphate = 2-deoxy-alpha-D-ribose 1-phosphate + thymine. It carries out the reaction uridine + phosphate = alpha-D-ribose 1-phosphate + uracil. The catalysed reaction is xanthosine + phosphate = alpha-D-ribose 1-phosphate + xanthine. Its function is as follows. Catalyzes the phosphorolysis of diverse nucleosides, yielding D-ribose 1-phosphate and the respective free bases. Can use uridine, adenosine, guanosine, cytidine, thymidine, inosine and xanthosine as substrates. Also catalyzes the reverse reactions. The sequence is that of Pyrimidine/purine nucleoside phosphorylase from Salmonella arizonae (strain ATCC BAA-731 / CDC346-86 / RSK2980).